Here is a 168-residue protein sequence, read N- to C-terminus: Transcription antitermination protein NusB (168 aa).

The protein belongs to the NusB family.

In terms of biological role, involved in transcription antitermination. Required for transcription of ribosomal RNA (rRNA) genes. Binds specifically to the boxA antiterminator sequence of the ribosomal RNA (rrn) operons. In Deinococcus deserti (strain DSM 17065 / CIP 109153 / LMG 22923 / VCD115), this protein is Transcription antitermination protein NusB.